A 173-amino-acid polypeptide reads, in one-letter code: Small ribosomal subunit protein uS7 (173 aa).

Belongs to the universal ribosomal protein uS7 family. In terms of assembly, part of the 30S ribosomal subunit. Contacts proteins S9 and S11.

One of the primary rRNA binding proteins, it binds directly to 16S rRNA where it nucleates assembly of the head domain of the 30S subunit. Is located at the subunit interface close to the decoding center, probably blocks exit of the E-site tRNA. This is Small ribosomal subunit protein uS7 from Orientia tsutsugamushi (strain Boryong) (Rickettsia tsutsugamushi).